Consider the following 150-residue polypeptide: UPF0178 protein Maqu_2186 (150 aa).

The protein belongs to the UPF0178 family.

This is UPF0178 protein Maqu_2186 from Marinobacter nauticus (strain ATCC 700491 / DSM 11845 / VT8) (Marinobacter aquaeolei).